A 310-amino-acid chain; its full sequence is GTPase Era (310 aa).

Residues 17-184 enclose the Era-type G domain; the sequence is RSGFVALIGA…MDYLAERLPE (168 aa). The segment at 25 to 32 is G1; it reads GATNAGKS. 25–32 serves as a coordination point for GTP; the sequence is GATNAGKS. The G2 stretch occupies residues 51–55; sequence QTTRA. The G3 stretch occupies residues 72–75; it reads DTPG. Residues 72–76 and 134–137 contribute to the GTP site; these read DTPGI and NKVD. The tract at residues 134-137 is G4; sequence NKVD. Residues 163–165 form a G5 region; it reads ISA. The KH type-2 domain occupies 215-292; the sequence is LHQELPYASH…HLFLFVKVRE (78 aa).

Belongs to the TRAFAC class TrmE-Era-EngA-EngB-Septin-like GTPase superfamily. Era GTPase family. Monomer.

The protein localises to the cytoplasm. Its subcellular location is the cell inner membrane. In terms of biological role, an essential GTPase that binds both GDP and GTP, with rapid nucleotide exchange. Plays a role in 16S rRNA processing and 30S ribosomal subunit biogenesis and possibly also in cell cycle regulation and energy metabolism. The polypeptide is GTPase Era (Sinorhizobium medicae (strain WSM419) (Ensifer medicae)).